We begin with the raw amino-acid sequence, 282 residues long: Probable ribosomal RNA small subunit methyltransferase A (282 aa).

His24, Leu26, Gly51, Glu72, Asp100, and Asn115 together coordinate S-adenosyl-L-methionine.

Belongs to the class I-like SAM-binding methyltransferase superfamily. rRNA adenine N(6)-methyltransferase family. RsmA subfamily.

It localises to the cytoplasm. Specifically dimethylates two adjacent adenosines in the loop of a conserved hairpin near the 3'-end of 16S rRNA in the 30S particle. May play a critical role in biogenesis of 30S subunits. The chain is Probable ribosomal RNA small subunit methyltransferase A from Halobacterium salinarum (strain ATCC 29341 / DSM 671 / R1).